The chain runs to 394 residues: Chaperone protein DnaJ (394 aa).

The 66-residue stretch at 6–71 (DYYEVLEVTK…DKRARYDQFG (66 aa)) folds into the J domain. A CR-type zinc finger spans residues 152–234 (GVEKKFKLKK…CGGEGIEYGE (83 aa)). Residues C165, C168, C182, C185, C208, C211, C222, and C225 each contribute to the Zn(2+) site. CXXCXGXG motif repeat units follow at residues 165 to 172 (CSHCHGTG), 182 to 189 (CPTCKGSG), 208 to 215 (CPTCNGEG), and 222 to 229 (CKVCGGEG).

The protein belongs to the DnaJ family. Homodimer. It depends on Zn(2+) as a cofactor.

The protein localises to the cytoplasm. Participates actively in the response to hyperosmotic and heat shock by preventing the aggregation of stress-denatured proteins and by disaggregating proteins, also in an autonomous, DnaK-independent fashion. Unfolded proteins bind initially to DnaJ; upon interaction with the DnaJ-bound protein, DnaK hydrolyzes its bound ATP, resulting in the formation of a stable complex. GrpE releases ADP from DnaK; ATP binding to DnaK triggers the release of the substrate protein, thus completing the reaction cycle. Several rounds of ATP-dependent interactions between DnaJ, DnaK and GrpE are required for fully efficient folding. Also involved, together with DnaK and GrpE, in the DNA replication of plasmids through activation of initiation proteins. The protein is Chaperone protein DnaJ of Bacteroides fragilis (strain YCH46).